We begin with the raw amino-acid sequence, 675 residues long: Methionine--tRNA ligase (675 aa).

A 'HIGH' region motif is present at residues P12–H22. Residues C143, C146, C156, and C159 each coordinate Zn(2+). The 'KMSKS' region motif lies at K328 to S332. Position 331 (K331) interacts with ATP. The 102-residue stretch at D574–K675 folds into the tRNA-binding domain.

The protein belongs to the class-I aminoacyl-tRNA synthetase family. MetG type 1 subfamily. As to quaternary structure, homodimer. Zn(2+) is required as a cofactor.

It localises to the cytoplasm. It catalyses the reaction tRNA(Met) + L-methionine + ATP = L-methionyl-tRNA(Met) + AMP + diphosphate. In terms of biological role, is required not only for elongation of protein synthesis but also for the initiation of all mRNA translation through initiator tRNA(fMet) aminoacylation. The polypeptide is Methionine--tRNA ligase (Alkalilimnicola ehrlichii (strain ATCC BAA-1101 / DSM 17681 / MLHE-1)).